We begin with the raw amino-acid sequence, 480 residues long: Adenosylhomocysteinase (480 aa).

Positions 63, 142, and 203 each coordinate substrate. Threonine 204 to threonine 206 serves as a coordination point for NAD(+). Substrate is bound by residues lysine 233 and aspartate 237. Residues asparagine 238, glycine 267 to glycine 272, glutamate 290, asparagine 325, isoleucine 346 to histidine 348, and asparagine 394 contribute to the NAD(+) site.

Belongs to the adenosylhomocysteinase family. Requires NAD(+) as cofactor.

Its subcellular location is the cytoplasm. It catalyses the reaction S-adenosyl-L-homocysteine + H2O = L-homocysteine + adenosine. The protein operates within amino-acid biosynthesis; L-homocysteine biosynthesis; L-homocysteine from S-adenosyl-L-homocysteine: step 1/1. Its function is as follows. May play a key role in the regulation of the intracellular concentration of adenosylhomocysteine. The protein is Adenosylhomocysteinase of Xanthomonas oryzae pv. oryzae (strain PXO99A).